Here is a 161-residue protein sequence, read N- to C-terminus: Crossover junction endodeoxyribonuclease RuvC (161 aa).

Catalysis depends on residues Asp-8, Glu-67, and Asp-139. Mg(2+)-binding residues include Asp-8, Glu-67, and Asp-139.

It belongs to the RuvC family. As to quaternary structure, homodimer which binds Holliday junction (HJ) DNA. The HJ becomes 2-fold symmetrical on binding to RuvC with unstacked arms; it has a different conformation from HJ DNA in complex with RuvA. In the full resolvosome a probable DNA-RuvA(4)-RuvB(12)-RuvC(2) complex forms which resolves the HJ. Mg(2+) serves as cofactor.

It is found in the cytoplasm. It catalyses the reaction Endonucleolytic cleavage at a junction such as a reciprocal single-stranded crossover between two homologous DNA duplexes (Holliday junction).. Its function is as follows. The RuvA-RuvB-RuvC complex processes Holliday junction (HJ) DNA during genetic recombination and DNA repair. Endonuclease that resolves HJ intermediates. Cleaves cruciform DNA by making single-stranded nicks across the HJ at symmetrical positions within the homologous arms, yielding a 5'-phosphate and a 3'-hydroxyl group; requires a central core of homology in the junction. The consensus cleavage sequence is 5'-(A/T)TT(C/G)-3'. Cleavage occurs on the 3'-side of the TT dinucleotide at the point of strand exchange. HJ branch migration catalyzed by RuvA-RuvB allows RuvC to scan DNA until it finds its consensus sequence, where it cleaves and resolves the cruciform DNA. The chain is Crossover junction endodeoxyribonuclease RuvC from Wigglesworthia glossinidia brevipalpis.